The chain runs to 507 residues: Arabinose import ATP-binding protein AraG (507 aa).

ABC transporter domains are found at residues 14-249 and 249-505; these read LRFN…MVGR and RDIQ…LPRT. An ATP-binding site is contributed by 46–53; it reads GENGAGKS.

This sequence belongs to the ABC transporter superfamily. Arabinose importer (TC 3.A.1.2.2) family. As to quaternary structure, the complex is composed of two ATP-binding proteins (AraG), two transmembrane proteins (AraH) and a solute-binding protein (AraF).

It localises to the cell inner membrane. The catalysed reaction is L-arabinose(out) + ATP + H2O = L-arabinose(in) + ADP + phosphate + H(+). Its function is as follows. Part of the ABC transporter complex AraFGH involved in arabinose import. Responsible for energy coupling to the transport system. The polypeptide is Arabinose import ATP-binding protein AraG (Pseudomonas syringae pv. tomato (strain ATCC BAA-871 / DC3000)).